The following is a 396-amino-acid chain: Zinc metalloproteinase nas-19 (396 aa).

An N-terminal signal peptide occupies residues 1–20 (MVRLIHLIGAIILLFSYAYC). The Peptidase M12A domain maps to 38–231 (RVKRQFERLG…YKINQYYGCW (194 aa)). N79 carries an N-linked (GlcNAc...) asparagine glycan. 4 disulfides stabilise this stretch: C82-C230, C105-C130, C232-C252, and C254-C263. A Zn(2+)-binding site is contributed by H138. The active site involves E139. Zn(2+) contacts are provided by H142 and H148. Positions 225 to 264 (NQYYGCWCSKQLECKNGGYTSPSDCSRCNCPKGFFGNLCD) constitute an EGF-like domain. Residue N310 is glycosylated (N-linked (GlcNAc...) asparagine).

It depends on Zn(2+) as a cofactor.

Its subcellular location is the secreted. Its function is as follows. Metalloprotease. The protein is Zinc metalloproteinase nas-19 (nas-19) of Caenorhabditis elegans.